Here is a 232-residue protein sequence, read N- to C-terminus: Orotate phosphoribosyltransferase (232 aa).

5-phospho-alpha-D-ribose 1-diphosphate contacts are provided by residues arginine 107, lysine 108, lysine 111, and 133-141 (EDLTTDGGS). Threonine 137 contributes to the orotate binding site.

This sequence belongs to the purine/pyrimidine phosphoribosyltransferase family. PyrE subfamily. As to quaternary structure, homodimer. Mg(2+) is required as a cofactor.

It carries out the reaction orotidine 5'-phosphate + diphosphate = orotate + 5-phospho-alpha-D-ribose 1-diphosphate. The protein operates within pyrimidine metabolism; UMP biosynthesis via de novo pathway; UMP from orotate: step 1/2. Functionally, catalyzes the transfer of a ribosyl phosphate group from 5-phosphoribose 1-diphosphate to orotate, leading to the formation of orotidine monophosphate (OMP). The polypeptide is Orotate phosphoribosyltransferase (Cereibacter sphaeroides (strain ATCC 17023 / DSM 158 / JCM 6121 / CCUG 31486 / LMG 2827 / NBRC 12203 / NCIMB 8253 / ATH 2.4.1.) (Rhodobacter sphaeroides)).